The chain runs to 105 residues: Anti-sigma factor RsrA (105 aa).

Residues cysteine 11, histidine 37, cysteine 41, and cysteine 44 each contribute to the Zn(2+) site. A disulfide bond links cysteine 11 and cysteine 44. Positions 33–47 (KFEHHFEECSPCLEK) are contributes to redox-sensitivity. Residues 86-105 (QSVPEHDVAAAPSSSAPQES) form a disordered region. The segment covering 94–105 (AAAPSSSAPQES) has biased composition (low complexity).

The protein belongs to the zinc-associated anti-sigma factor (ZAS) superfamily. Interacts with cognate sigma factor SigR under reducing but not oxiding conditions. Treatment with the thiol-oxidzing agent diamide inhibits the interaction, while incubation with thioredoxin (trxA) stimulates the interaction. Zn(2+) is required as a cofactor. Under oxidizing conditions up to 3 disulfide bonds are formed. A single disulfide bond inhibits binding to SigR. Cys-11 forms a disulfide bond with either Cys-44 (the major bind) or Cys-41 (a minor bond).

In terms of biological role, a redox-regulated anti-sigma factor for extracytoplasmic function (ECF) sigma factor SigR, and a key sensor of disulfide stress. Holds SigR, its cognate ECF sigma factor, in an inactive form, inhibiting its sigma activity under reducing but not oxidizing conditions; oxidation and reduction of the anti-sigma factor is reversible. Mycothiol (MSH) is competent for reduction of RsrA, allowing it to bind to SigR. In conjunction with its cognate sigma factor SigR may sense the intracellular level of reduced MSH. Probably releases SigR during oxidative stress. This is Anti-sigma factor RsrA (rsrA) from Streptomyces coelicolor (strain ATCC BAA-471 / A3(2) / M145).